Reading from the N-terminus, the 343-residue chain is Oxygen-dependent coproporphyrinogen-III oxidase (343 aa).

Serine 99 contributes to the substrate binding site. Residues histidine 103 and histidine 113 each coordinate a divalent metal cation. Histidine 113 (proton donor) is an active-site residue. Position 115 to 117 (115 to 117 (NYR)) interacts with substrate. Histidine 147 and histidine 177 together coordinate a divalent metal cation. The tract at residues 267-302 (YVEFNLVWDRGTIFGLQTNGRTESILMSLPPLARWE) is important for dimerization.

It belongs to the aerobic coproporphyrinogen-III oxidase family. As to quaternary structure, homodimer. The cofactor is a divalent metal cation.

Its subcellular location is the cytoplasm. It carries out the reaction coproporphyrinogen III + O2 + 2 H(+) = protoporphyrinogen IX + 2 CO2 + 2 H2O. The protein operates within porphyrin-containing compound metabolism; protoporphyrin-IX biosynthesis; protoporphyrinogen-IX from coproporphyrinogen-III (O2 route): step 1/1. Involved in the heme and chlorophyll biosynthesis. Catalyzes the aerobic oxidative decarboxylation of propionate groups of rings A and B of coproporphyrinogen-III to yield the vinyl groups in protoporphyrinogen-IX. This is Oxygen-dependent coproporphyrinogen-III oxidase from Prochlorococcus marinus (strain SARG / CCMP1375 / SS120).